Here is a 136-residue protein sequence, read N- to C-terminus: Large ribosomal subunit protein uL16c (136 aa).

It belongs to the universal ribosomal protein uL16 family. In terms of assembly, part of the 50S ribosomal subunit.

Its subcellular location is the plastid. It is found in the chloroplast. The sequence is that of Large ribosomal subunit protein uL16c from Saccharum hybrid (Sugarcane).